The sequence spans 36 residues: Photosystem I reaction center subunit VIII (36 aa).

Residues 9 to 29 (ILTPVVTLVFPGLMFALFFVL) traverse the membrane as a helical segment.

It belongs to the PsaI family.

The protein resides in the plastid. Its subcellular location is the chloroplast thylakoid membrane. Functionally, may help in the organization of the PsaL subunit. In Emiliania huxleyi (Coccolithophore), this protein is Photosystem I reaction center subunit VIII.